Here is an 838-residue protein sequence, read N- to C-terminus: Polyribonucleotide nucleotidyltransferase (838 aa).

Mg(2+) is bound by residues Asp-494 and Asp-500. In terms of domain architecture, KH spans 561–620; that stretch reads PRMESMLIDKGKIKNVIGAGGKNVREICEKTGAKIEISQDGTVMIYAVGREAIESAKDMI. The 68-residue stretch at 630–697 folds into the S1 motif domain; the sequence is GKIYSGEVCE…DKDHIQLSMR (68 aa). Gly residues predominate over residues 747–757; sequence GGASAGRNGRG. The interval 747-838 is disordered; that stretch reads GGASAGRNGR…PAAPKKPRFF (92 aa). Residues 788-810 are compositionally biased toward low complexity; it reads AGSSGYSSDSSSGNTKSSSSESS. The span at 811-820 shows a compositional bias: gly residues; sequence GGTGGRGRNG.

This sequence belongs to the polyribonucleotide nucleotidyltransferase family. Requires Mg(2+) as cofactor.

The protein resides in the cytoplasm. The catalysed reaction is RNA(n+1) + phosphate = RNA(n) + a ribonucleoside 5'-diphosphate. In terms of biological role, involved in mRNA degradation. Catalyzes the phosphorolysis of single-stranded polyribonucleotides processively in the 3'- to 5'-direction. The polypeptide is Polyribonucleotide nucleotidyltransferase (Anaplasma phagocytophilum (strain HZ)).